A 156-amino-acid chain; its full sequence is 2-C-methyl-D-erythritol 2,4-cyclodiphosphate synthase (156 aa).

A divalent metal cation-binding residues include Asp-9 and His-11. 4-CDP-2-C-methyl-D-erythritol 2-phosphate contacts are provided by residues 9–11 and 36–37; these read DAH and HS. His-44 contributes to the a divalent metal cation binding site. 58 to 60 contacts 4-CDP-2-C-methyl-D-erythritol 2-phosphate; it reads NIG.

The protein belongs to the IspF family. Homotrimer. A divalent metal cation is required as a cofactor.

The enzyme catalyses 4-CDP-2-C-methyl-D-erythritol 2-phosphate = 2-C-methyl-D-erythritol 2,4-cyclic diphosphate + CMP. The protein operates within isoprenoid biosynthesis; isopentenyl diphosphate biosynthesis via DXP pathway; isopentenyl diphosphate from 1-deoxy-D-xylulose 5-phosphate: step 4/6. Functionally, involved in the biosynthesis of isopentenyl diphosphate (IPP) and dimethylallyl diphosphate (DMAPP), two major building blocks of isoprenoid compounds. Catalyzes the conversion of 4-diphosphocytidyl-2-C-methyl-D-erythritol 2-phosphate (CDP-ME2P) to 2-C-methyl-D-erythritol 2,4-cyclodiphosphate (ME-CPP) with a corresponding release of cytidine 5-monophosphate (CMP). This is 2-C-methyl-D-erythritol 2,4-cyclodiphosphate synthase from Kosmotoga olearia (strain ATCC BAA-1733 / DSM 21960 / TBF 19.5.1).